A 248-amino-acid chain; its full sequence is MHPMNRYEVALVTGASSGIGKAIALELASAGLRVLALGRDRAALDELHSTAGIVPVVFDLSDVSEVYGKIAGEKIDVLVNNAGLLTASASLVDLSEDDIDAMIDINIRSVFKLTRHVLKQMIERRRGHIFFTGSSGGLAPHPNSSVYGATKAAVSLFSSALRCDLIGLPIRVTELFPGRVETNLYRTALGKEGAKKKLYDDNEAIQPEHMARLLRTALELPDFVDVTRLEVMPTGQVVGGAQMSKLSR.

8–32 (EVALVTGASSGIGKAIALELASAGL) is a binding site for NADP(+). S134 contacts substrate. The active-site Proton acceptor is Y147.

The protein belongs to the short-chain dehydrogenases/reductases (SDR) family.

This is an uncharacterized protein from Sinorhizobium fredii (strain NBRC 101917 / NGR234).